We begin with the raw amino-acid sequence, 228 residues long: Ion-translocating oxidoreductase complex subunit E (228 aa).

The next 5 membrane-spanning stretches (helical) occupy residues 18–38, 69–89, 92–112, 125–145, and 182–202; these read ALVQ…ATNA, IPIY…LINA, FGLY…CIVV, LLSA…MFVL, and PFLL…MLAV.

It belongs to the NqrDE/RnfAE family. As to quaternary structure, the complex is composed of six subunits: RnfA, RnfB, RnfC, RnfD, RnfE and RnfG.

Its subcellular location is the cell inner membrane. Its function is as follows. Part of a membrane-bound complex that couples electron transfer with translocation of ions across the membrane. The polypeptide is Ion-translocating oxidoreductase complex subunit E (Cronobacter sakazakii (strain ATCC BAA-894) (Enterobacter sakazakii)).